We begin with the raw amino-acid sequence, 476 residues long: Cysteine--tRNA ligase (476 aa).

Cysteine 31 provides a ligand contact to Zn(2+). The 'HIGH' region motif lies at proline 33–asparagine 43. 3 residues coordinate Zn(2+): cysteine 211, histidine 236, and glutamate 240. A 'KMSKS' region motif is present at residues lysine 269 to serine 273. Lysine 272 contacts ATP.

The protein belongs to the class-I aminoacyl-tRNA synthetase family. In terms of assembly, monomer. It depends on Zn(2+) as a cofactor.

It is found in the cytoplasm. The enzyme catalyses tRNA(Cys) + L-cysteine + ATP = L-cysteinyl-tRNA(Cys) + AMP + diphosphate. This chain is Cysteine--tRNA ligase, found in Xanthomonas axonopodis pv. citri (strain 306).